Here is a 495-residue protein sequence, read N- to C-terminus: Probable cytosol aminopeptidase (495 aa).

Mn(2+) is bound by residues Lys-258 and Asp-263. Lys-270 is a catalytic residue. Mn(2+)-binding residues include Asp-281, Asp-340, and Glu-342. Arg-344 is a catalytic residue.

The protein belongs to the peptidase M17 family. Requires Mn(2+) as cofactor.

Its subcellular location is the cytoplasm. It carries out the reaction Release of an N-terminal amino acid, Xaa-|-Yaa-, in which Xaa is preferably Leu, but may be other amino acids including Pro although not Arg or Lys, and Yaa may be Pro. Amino acid amides and methyl esters are also readily hydrolyzed, but rates on arylamides are exceedingly low.. The enzyme catalyses Release of an N-terminal amino acid, preferentially leucine, but not glutamic or aspartic acids.. Its function is as follows. Presumably involved in the processing and regular turnover of intracellular proteins. Catalyzes the removal of unsubstituted N-terminal amino acids from various peptides. This chain is Probable cytosol aminopeptidase, found in Leptospira interrogans serogroup Icterohaemorrhagiae serovar copenhageni (strain Fiocruz L1-130).